Reading from the N-terminus, the 94-residue chain is uncharacterized protein (94 aa).

Positions 13 to 67 constitute an HTH cro/C1-type domain; that stretch reads IQESLDELNVSLREFARAMEIAPSTASRLLTGKAALTPEMAIKLSVVIGSSPQMW. Positions 24–43 form a DNA-binding region, H-T-H motif; sequence LREFARAMEIAPSTASRLLT.

Belongs to the VapA/VapI family.

This is an uncharacterized protein from Escherichia coli (strain K12).